The sequence spans 170 residues: MNQMQEIIIDKVVVNIGVGQAGDRLTKAAKVLEMLTGHKPTQTLAKKSVRDFNIRKRLPIGVKVTLRKDDAVNFLNKALYVKDYKIPDYSFDKHGNAYFGISDYTDFKGMKYDPDIGIFGMDVAIVLKRRGGYRIEKRKIGKKTIPSSIRIKKDEAVEFLEKNFKVSVVR.

The protein belongs to the universal ribosomal protein uL5 family. In terms of assembly, part of the 50S ribosomal subunit; contacts the 5S rRNA and probably tRNA. Forms a bridge to the 30S subunit in the 70S ribosome.

This is one of the proteins that bind and probably mediate the attachment of the 5S RNA into the large ribosomal subunit, where it forms part of the central protuberance. In the 70S ribosome it contacts protein S13 of the 30S subunit (bridge B1b), connecting the 2 subunits; this bridge is implicated in subunit movement. May contact the P site tRNA; the 5S rRNA and some of its associated proteins might help stabilize positioning of ribosome-bound tRNAs. The sequence is that of Large ribosomal subunit protein uL5 from Thermoplasma volcanium (strain ATCC 51530 / DSM 4299 / JCM 9571 / NBRC 15438 / GSS1).